We begin with the raw amino-acid sequence, 215 residues long: Outer-membrane lipoprotein LolB (215 aa).

The first 21 residues, 1–21 (MLIPKKYYLLIILLSNCLLAS), serve as a signal peptide directing secretion. The N-palmitoyl cysteine moiety is linked to residue cysteine 22. Cysteine 22 carries S-diacylglycerol cysteine lipidation.

Belongs to the LolB family. In terms of assembly, monomer.

It localises to the cell outer membrane. Functionally, plays a critical role in the incorporation of lipoproteins in the outer membrane after they are released by the LolA protein. This Baumannia cicadellinicola subsp. Homalodisca coagulata protein is Outer-membrane lipoprotein LolB.